Here is a 480-residue protein sequence, read N- to C-terminus: Protein nucleotidyltransferase YdiU (480 aa).

ATP is bound by residues G86, G88, R89, K109, D121, G122, R172, and R179. D248 serves as the catalytic Proton acceptor. Residues N249 and D258 each coordinate Mg(2+). Position 258 (D258) interacts with ATP.

Belongs to the SELO family. Requires Mg(2+) as cofactor. Mn(2+) serves as cofactor.

The enzyme catalyses L-seryl-[protein] + ATP = 3-O-(5'-adenylyl)-L-seryl-[protein] + diphosphate. It catalyses the reaction L-threonyl-[protein] + ATP = 3-O-(5'-adenylyl)-L-threonyl-[protein] + diphosphate. The catalysed reaction is L-tyrosyl-[protein] + ATP = O-(5'-adenylyl)-L-tyrosyl-[protein] + diphosphate. It carries out the reaction L-histidyl-[protein] + UTP = N(tele)-(5'-uridylyl)-L-histidyl-[protein] + diphosphate. The enzyme catalyses L-seryl-[protein] + UTP = O-(5'-uridylyl)-L-seryl-[protein] + diphosphate. It catalyses the reaction L-tyrosyl-[protein] + UTP = O-(5'-uridylyl)-L-tyrosyl-[protein] + diphosphate. In terms of biological role, nucleotidyltransferase involved in the post-translational modification of proteins. It can catalyze the addition of adenosine monophosphate (AMP) or uridine monophosphate (UMP) to a protein, resulting in modifications known as AMPylation and UMPylation. The protein is Protein nucleotidyltransferase YdiU of Salmonella enteritidis PT4 (strain P125109).